A 317-amino-acid chain; its full sequence is Beta-sarcoglycan (317 aa).

A disordered region spans residues 1-31 (MAAAAAATEQQSSNGPVKKSMREKAVERRNV). Over 1–64 (MAAAAAATEQ…GLRGRKGNLA (64 aa)) the chain is Cytoplasmic. Positions 20-31 (SMREKAVERRNV) are enriched in basic and acidic residues. The helical; Signal-anchor for type II membrane protein transmembrane segment at 65–85 (ICVIVLLFILAVINLIITLVI) threads the bilayer. The Extracellular portion of the chain corresponds to 86–317 (WAVIRIGPNG…TSDNPCGDLY (232 aa)). Asn157, Asn210, and Asn257 each carry an N-linked (GlcNAc...) asparagine glycan. 2 disulfide bridges follow: Cys287/Cys313 and Cys289/Cys306.

Belongs to the sarcoglycan beta/delta/gamma/zeta family. In terms of assembly, cross-link to form 2 major subcomplexes: one consisting of SGCB, SGCD and SGCG and the other consisting of SGCB and SGCD. The association between SGCB and SGCG is particularly strong while SGCA is loosely associated with the other sarcoglycans. Disulfide bonds are present.

Its subcellular location is the cell membrane. The protein localises to the sarcolemma. It localises to the cytoplasm. It is found in the cytoskeleton. Functionally, component of the sarcoglycan complex, a subcomplex of the dystrophin-glycoprotein complex which forms a link between the F-actin cytoskeleton and the extracellular matrix. This is Beta-sarcoglycan (SGCB) from Bos taurus (Bovine).